A 209-amino-acid chain; its full sequence is NAD(P)H-quinone oxidoreductase subunit N, chloroplastic (209 aa).

Residues 1–45 (MGSRAICIQRVAPPCFEASQVKKIKTVGSFLVNTRSKRRRSTGVK) constitute a chloroplast transit peptide.

It belongs to the NDH complex subunit N family. Part of the chloroplast NDH complex, composed of a mixture of chloroplast and nucleus encoded subunits. Component of the NDH subcomplex A, at least composed of ndhH, ndhI, ndhJ, ndhK, ndhL, ndhM, ndhN and ndhO.

The protein localises to the plastid. It is found in the chloroplast thylakoid membrane. It catalyses the reaction a plastoquinone + NADH + (n+1) H(+)(in) = a plastoquinol + NAD(+) + n H(+)(out). It carries out the reaction a plastoquinone + NADPH + (n+1) H(+)(in) = a plastoquinol + NADP(+) + n H(+)(out). In terms of biological role, NDH shuttles electrons from NAD(P)H:plastoquinone, via FMN and iron-sulfur (Fe-S) centers, to quinones in the photosynthetic chain and possibly in a chloroplast respiratory chain. The immediate electron acceptor for the enzyme in this species is believed to be plastoquinone. Couples the redox reaction to proton translocation, and thus conserves the redox energy in a proton gradient. In Arabidopsis thaliana (Mouse-ear cress), this protein is NAD(P)H-quinone oxidoreductase subunit N, chloroplastic.